Here is a 142-residue protein sequence, read N- to C-terminus: Transcription antitermination protein NusB (142 aa).

It belongs to the NusB family.

Involved in transcription antitermination. Required for transcription of ribosomal RNA (rRNA) genes. Binds specifically to the boxA antiterminator sequence of the ribosomal RNA (rrn) operons. The polypeptide is Transcription antitermination protein NusB (Streptomyces coelicolor (strain ATCC BAA-471 / A3(2) / M145)).